We begin with the raw amino-acid sequence, 699 residues long: (E2-independent) E3 ubiquitin-conjugating enzyme FATS (699 aa).

The tract at residues 48 to 116 (MISSIVISQM…LGIPAPSDER (69 aa)) is required for interaction with p53/TP53. 3 disordered regions span residues 107-134 (LGIP…GGPR), 443-473 (KPTR…ERRH), and 528-569 (KSED…PARS). 2 stretches are compositionally biased toward basic and acidic residues: residues 113 to 129 (SDER…EERP) and 460 to 473 (CLSR…ERRH). Residues 116-224 (RGPEAELPPK…GLCERRKYWV (109 aa)) form a required for interaction with HDAC1 region. Positions 534 to 545 (TPEPSPAAPSPA) are enriched in pro residues. Positions 571-699 (TLQEALEVRK…LDQLLQRNAV (129 aa)) are ALMS motif.

Interacts with HDAC1; the interaction prevents binding of HDAC1 to CDKN1A/p21 and facilitates the acetylation and stabilization of CDKN1A/p21. Interacts with p53/TP53; the interaction inhibits binding of p53/TP53 and MDM2.

The protein localises to the cytoplasm. Its subcellular location is the cytoskeleton. The protein resides in the microtubule organizing center. It is found in the centrosome. Tumor suppressor that is required to sustain G2/M checkpoint after DNA damage. Acts as a p53/TP53 activator by inhibiting MDM2 binding to p53/TP53 and stimulating non-proteolytic polyubiquitination of p53/TP53. Exhibits ubiquitin ligase (E3) activity and assemble ubiquitin polymers through 'Lys-11'- (K11-), 'Lys-29'- (K29-) and 'Lys-63'- (K63)-linkages, independently of the ubiquitin-conjugating enzyme (E2). Promotes p53/TP53-dependent transcription of CDKN1A/p21, leading to robust checkpoint response. Mediates CDKN1A/p21 protein stability in a ubiquitin-independent manner. Interacts with HDAC1 and prevents binding of HDAC1 to CDKN1A/p21 and facilitates the acetylation and stabilization of CDKN1A/p21. May have a role in the assembly of primary cilia. The chain is (E2-independent) E3 ubiquitin-conjugating enzyme FATS from Homo sapiens (Human).